The following is a 291-amino-acid chain: Elongation factor Ts, mitochondrial (291 aa).

This sequence belongs to the EF-Ts family.

The protein resides in the mitochondrion. Associates with the EF-Tu.GDP complex and induces the exchange of GDP to GTP. It remains bound to the aminoacyl-tRNA.EF-Tu.GTP complex up to the GTP hydrolysis stage on the ribosome. This Nematostella vectensis (Starlet sea anemone) protein is Elongation factor Ts, mitochondrial.